A 141-amino-acid polypeptide reads, in one-letter code: Nucleoside diphosphate kinase (141 aa).

Residues K11, F59, R87, T93, R104, and N114 each coordinate ATP. H117 functions as the Pros-phosphohistidine intermediate in the catalytic mechanism.

It belongs to the NDK family. As to quaternary structure, homotetramer. The cofactor is Mg(2+).

It localises to the cytoplasm. It carries out the reaction a 2'-deoxyribonucleoside 5'-diphosphate + ATP = a 2'-deoxyribonucleoside 5'-triphosphate + ADP. The catalysed reaction is a ribonucleoside 5'-diphosphate + ATP = a ribonucleoside 5'-triphosphate + ADP. Its function is as follows. Major role in the synthesis of nucleoside triphosphates other than ATP. The ATP gamma phosphate is transferred to the NDP beta phosphate via a ping-pong mechanism, using a phosphorylated active-site intermediate. This chain is Nucleoside diphosphate kinase, found in Chromobacterium violaceum (strain ATCC 12472 / DSM 30191 / JCM 1249 / CCUG 213 / NBRC 12614 / NCIMB 9131 / NCTC 9757 / MK).